The following is a 68-amino-acid chain: Alpha-conotoxin Lp1.1 (68 aa).

Positions 1–21 (MGMRMMFIMFMLVVLATTVVT) are cleaved as a signal peptide. A propeptide spanning residues 22 to 48 (FTSDRALDAMNAAASNKASRLIALAVR) is cleaved from the precursor. Disulfide bonds link C50/C56 and C51/C64. The interval 52–54 (ARA) is lacks the Ser-Xaa-Pro motif that is crucial for potent interaction with nAChR. At G65 the chain carries Glycine amide. A propeptide spanning residues 66-68 (GGR) is cleaved from the precursor.

The protein belongs to the conotoxin A superfamily. Expressed by the venom duct.

It localises to the secreted. In terms of biological role, alpha-conotoxins act on postsynaptic membranes, they bind to the nicotinic acetylcholine receptors (nAChR) and thus inhibit them. Synthetic peptide inhibits alpha-6/alpha-3/beta-2 and alpha-3/beta-2 nicotinic acetylcholine receptors and causes uncoordinated movement when intramuscularly injected into goldfish. Has a distinct nAChR binding mode from other alpha-conotoxins, due to a different three residue motif (Ala-Xaa-Ala instead of the conserved Ser-Xaa-Pro motif). The chain is Alpha-conotoxin Lp1.1 from Conus leopardus (Leopard cone).